Reading from the N-terminus, the 280-residue chain is Nitrogenase iron protein (280 aa).

Residue 9–16 (GKGGIGKS) coordinates ATP. Position 97 (Cys97) interacts with [4Fe-4S] cluster. ADP-ribosylarginine; by dinitrogenase reductase ADP-ribosyltransferase is present on Arg100. Residue Cys132 participates in [4Fe-4S] cluster binding.

This sequence belongs to the NifH/BchL/ChlL family. In terms of assembly, homodimer. The cofactor is [4Fe-4S] cluster. The reversible ADP-ribosylation of Arg-100 inactivates the nitrogenase reductase and regulates nitrogenase activity.

The enzyme catalyses N2 + 8 reduced [2Fe-2S]-[ferredoxin] + 16 ATP + 16 H2O = H2 + 8 oxidized [2Fe-2S]-[ferredoxin] + 2 NH4(+) + 16 ADP + 16 phosphate + 6 H(+). Functionally, the key enzymatic reactions in nitrogen fixation are catalyzed by the nitrogenase complex, which has 2 components: the iron protein and the molybdenum-iron protein. This is Nitrogenase iron protein from Desulforudis audaxviator (strain MP104C).